Consider the following 457-residue polypeptide: Cysteine--tRNA ligase (457 aa).

Cys-27 lines the Zn(2+) pocket. The 'HIGH' region motif lies at 29–39 (ITPQSEPHIGH). Positions 207, 232, and 236 each coordinate Zn(2+). Residues 265–269 (KMSKS) carry the 'KMSKS' region motif. Residue Lys-268 coordinates ATP.

It belongs to the class-I aminoacyl-tRNA synthetase family. As to quaternary structure, monomer. Requires Zn(2+) as cofactor.

The protein localises to the cytoplasm. It carries out the reaction tRNA(Cys) + L-cysteine + ATP = L-cysteinyl-tRNA(Cys) + AMP + diphosphate. This is Cysteine--tRNA ligase from Dehalococcoides mccartyi (strain ATCC BAA-2100 / JCM 16839 / KCTC 5957 / BAV1).